The sequence spans 493 residues: Glutamyl-tRNA(Gln) amidotransferase subunit A (493 aa).

Residues K79 and S159 each act as charge relay system in the active site. S183 acts as the Acyl-ester intermediate in catalysis.

Belongs to the amidase family. GatA subfamily. In terms of assembly, heterotrimer of A, B and C subunits.

It carries out the reaction L-glutamyl-tRNA(Gln) + L-glutamine + ATP + H2O = L-glutaminyl-tRNA(Gln) + L-glutamate + ADP + phosphate + H(+). Its function is as follows. Allows the formation of correctly charged Gln-tRNA(Gln) through the transamidation of misacylated Glu-tRNA(Gln) in organisms which lack glutaminyl-tRNA synthetase. The reaction takes place in the presence of glutamine and ATP through an activated gamma-phospho-Glu-tRNA(Gln). The sequence is that of Glutamyl-tRNA(Gln) amidotransferase subunit A from Brucella suis (strain ATCC 23445 / NCTC 10510).